Here is a 113-residue protein sequence, read N- to C-terminus: Large ribosomal subunit protein bL17 (113 aa).

This sequence belongs to the bacterial ribosomal protein bL17 family. In terms of assembly, part of the 50S ribosomal subunit. Contacts protein L32.

This chain is Large ribosomal subunit protein bL17, found in Clostridium botulinum (strain ATCC 19397 / Type A).